A 178-amino-acid chain; its full sequence is Nicotinamide-nucleotide adenylyltransferase (178 aa).

Belongs to the archaeal NMN adenylyltransferase family.

The protein resides in the cytoplasm. It catalyses the reaction beta-nicotinamide D-ribonucleotide + ATP + H(+) = diphosphate + NAD(+). It functions in the pathway cofactor biosynthesis; NAD(+) biosynthesis; NAD(+) from nicotinamide D-ribonucleotide: step 1/1. This is Nicotinamide-nucleotide adenylyltransferase from Caldivirga maquilingensis (strain ATCC 700844 / DSM 13496 / JCM 10307 / IC-167).